Here is a 562-residue protein sequence, read N- to C-terminus: Probable malate:quinone oxidoreductase (562 aa).

Residues 530-562 are disordered; that stretch reads EVPDKSATPPDPTIAPKHQHSPTHNANSEMQAL. The segment covering 551-562 has biased composition (polar residues); sequence PTHNANSEMQAL.

The protein belongs to the MQO family. FAD is required as a cofactor.

It carries out the reaction (S)-malate + a quinone = a quinol + oxaloacetate. It participates in carbohydrate metabolism; tricarboxylic acid cycle; oxaloacetate from (S)-malate (quinone route): step 1/1. The chain is Probable malate:quinone oxidoreductase from Xylella fastidiosa (strain 9a5c).